The following is a 612-amino-acid chain: Zinc metalloproteinase-disintegrin-like berythractivase (612 aa).

Positions 1–20 (MIQVLLVIICLEAFPYQGSS) are cleaved as a signal peptide. The propeptide occupies 21 to 187 (IILESGNVND…EPIKKASLLN (167 aa)). The region spanning 200–396 (KYVEFVVVLD…NRPQCLLNKP (197 aa)) is the Peptidase M12B domain. Ca(2+) is bound at residue E203. A glycan (N-linked (GlcNAc...) asparagine) is linked at N260. D287 lines the Ca(2+) pocket. Intrachain disulfides connect C311/C391, C351/C375, and C353/C358. Residue H336 participates in Zn(2+) binding. E337 is a catalytic residue. Zn(2+)-binding residues include H340 and H346. N348 carries an N-linked (GlcNAc...) asparagine glycan. The N-linked (GlcNAc...) asparagine glycan is linked to N374. Ca(2+) contacts are provided by C391, N394, V406, N409, L411, E413, E416, and D419. The Disintegrin domain occupies 404–490 (PPVCGNELLE…DCPMDDFQRN (87 aa)). 14 cysteine pairs are disulfide-bonded: C407–C436, C418–C431, C420–C426, C430–C453, C444–C450, C449–C475, C462–C482, C469–C501, C494–C506, C513–C563, C528–C574, C541–C551, C558–C600, and C594–C605. A glycan (N-linked (GlcNAc...) asparagine) is linked at N432. A D/ECD-tripeptide motif is present at residues 468–470 (DCD). The Ca(2+) site is built by D470, L471, E473, and D485.

This sequence belongs to the venom metalloproteinase (M12B) family. P-III subfamily. P-IIIa sub-subfamily. Monomer. Zn(2+) is required as a cofactor. Post-translationally, highly glycosylated. In terms of tissue distribution, expressed by the venom gland.

The protein resides in the secreted. With respect to regulation, inhibited by EDTA and o-phenanthroline. Not inhibited by PMSF, benzamidine, irreversible serine-proteinase inhibitors and cysteine proteinase inhibitor E-64. In terms of biological role, potent activator of prothrombin (F2). Does not elicit any hemorrhagic response. Barely inhibits collagen-induced platelet aggregation. Binds neither collagen, nor the jararhagin monoclonal antibody MAJar3. Hydrolyzes the Aalpha-chain of fibrin and fibrinogen, without affecting the Bbeta- and gamma-chains. Is capable of triggering endothelial pro-inflammatory and procoagulant cell responses, but fails to trigger apoptosis. Induces von Willebrand factor release, and the expression of both ICAM1 and E-selectin (SELE) (without increase in VCAM1) in endothelial cells (HUVEC). Is also able to up-regulate the synthesis of the coagulation factor TF (F3). Enhances nitric oxide (NO) generation, prostacyclin production and interleukin-8 release. This Bothrops erythromelas (Caatinga lance head) protein is Zinc metalloproteinase-disintegrin-like berythractivase.